We begin with the raw amino-acid sequence, 369 residues long: GTPase Obg (369 aa).

The Obg domain maps to 1 to 158 (MFTDVVELTV…RRIKLDLKLI (158 aa)). Positions 126–146 (NTHFKSSTNQRPTYAQPGEKG) are disordered. Polar residues predominate over residues 128–138 (HFKSSTNQRPT). The OBG-type G domain occupies 159 to 362 (ADVGLVGFPN…LKHALFNLVQ (204 aa)). GTP contacts are provided by residues 165-172 (GFPNVGKS), 190-194 (FTTLT), 212-215 (DIPG), 280-283 (TRAD), and 343-345 (SSA). Residues serine 172 and threonine 192 each contribute to the Mg(2+) site.

It belongs to the TRAFAC class OBG-HflX-like GTPase superfamily. OBG GTPase family. Monomer. Mg(2+) serves as cofactor.

It localises to the cytoplasm. In terms of biological role, an essential GTPase which binds GTP, GDP and possibly (p)ppGpp with moderate affinity, with high nucleotide exchange rates and a fairly low GTP hydrolysis rate. Plays a role in control of the cell cycle, stress response, ribosome biogenesis and in those bacteria that undergo differentiation, in morphogenesis control. The polypeptide is GTPase Obg (Sulfurimonas denitrificans (strain ATCC 33889 / DSM 1251) (Thiomicrospira denitrificans (strain ATCC 33889 / DSM 1251))).